Consider the following 202-residue polypeptide: N-(5'-phosphoribosyl)anthranilate isomerase (202 aa).

It belongs to the TrpF family.

It catalyses the reaction N-(5-phospho-beta-D-ribosyl)anthranilate = 1-(2-carboxyphenylamino)-1-deoxy-D-ribulose 5-phosphate. The protein operates within amino-acid biosynthesis; L-tryptophan biosynthesis; L-tryptophan from chorismate: step 3/5. The polypeptide is N-(5'-phosphoribosyl)anthranilate isomerase (Listeria monocytogenes serotype 4b (strain F2365)).